Here is a 632-residue protein sequence, read N- to C-terminus: uncharacterized protein (632 aa).

4 consecutive transmembrane segments (helical) span residues 255-275 (LFYA…ELRV), 506-526 (IALL…LTSI), 566-586 (MIFA…SMVF), and 603-623 (IVVI…AVLF).

The protein resides in the cell membrane. This is an uncharacterized protein from Mycoplasma pneumoniae (strain ATCC 29342 / M129 / Subtype 1) (Mycoplasmoides pneumoniae).